The primary structure comprises 299 residues: dTDP-4-dehydrorhamnose reductase (299 aa).

Residues 10 to 12 (GQV), aspartate 30, 39 to 40 (DF), and 63 to 65 (AHT) each bind NADH. 11–12 (QV) is an NADPH binding site. NADPH-binding positions include 39–40 (DF), 63–65 (AHT), and tyrosine 102. 104–105 (TD) serves as a coordination point for dTDP-beta-L-rhamnose. The NADH site is built by tyrosine 128 and lysine 132. NADPH-binding residues include tyrosine 128 and lysine 132. Catalysis depends on tyrosine 128, which acts as the Proton donor/acceptor. Tryptophan 153 contacts dTDP-beta-L-rhamnose.

The protein belongs to the dTDP-4-dehydrorhamnose reductase family. In terms of assembly, homodimer. Mg(2+) serves as cofactor.

The catalysed reaction is dTDP-beta-L-rhamnose + NADP(+) = dTDP-4-dehydro-beta-L-rhamnose + NADPH + H(+). The protein operates within carbohydrate biosynthesis; dTDP-L-rhamnose biosynthesis. Its pathway is bacterial outer membrane biogenesis; LPS O-antigen biosynthesis. In terms of biological role, involved in the biosynthesis of the dTDP-L-rhamnose which is an important component of lipopolysaccharide (LPS). Catalyzes the reduction of dTDP-6-deoxy-L-lyxo-4-hexulose to yield dTDP-L-rhamnose. RmlD uses NADH and NADPH nearly equally well. The chain is dTDP-4-dehydrorhamnose reductase from Shigella flexneri.